The chain runs to 879 residues: MKQLSSAEVRQLFLDFFKEKGHTIEPSAPLVPNNDPTILWINSGVATMKKYFDGSVIPDNPRMANAQKSIRTNDIENVGKTARHHTFFEMLGNFSIGDYFKEGAIVFAWEFLTSPKWIGFDPDKLYVTVYPEDEEAKTLWREKIGLSDDHIVEIEDNFWDIGIGPSGPDSEIFYDRGPAFGDDASDPELYPGGENERYLEIWNLVFSQFNHNPDGTYTPLPKQNIDTGMGLERMVSIIQDAPTNFETDLFMPIIREVEQIAGVKYGHSQENDVAFKVIADHIRTVAFAIGDGALPSNEGRGYILRRLLRRAVRYAKVLTINEPFMYKLVPVVGKIMNSFYPEVENQTDFIQKVIRTEEERFHETLNEGLAILETILKTAKETNEQVIKGADIFKLYDTFGFPVELTEEYAEDHGLKVDHAGFEAEMKEQRARARAARADVKSMQVQGELLANLTEKSAFVGYNSTEHVSEILYLIQNDTLVDEVAAGNEAQVIFKETPFYAESGGQVADKGTIESETGLAYVEDVQKAPNKQNLHRISVKEGVLKTGDTVKLAVDKVKRRETIKNHTATHLLHRALKDTLGEHVNQAGSLVSPDRLRFDFSHFGQITEEELTKMEEIVNEKIWEQINVVIEEMPIAEAKELGAMALFGEKYGDIVRVVQVGKYSIELCGGVHVRNTADIGLFKIVSETGIGAGTRRIEAVTGKEAYRFVTEQENTLKQAASLLKTTTKETPQKVELLQADLREVKRENESLLSKLASAASADIFESPEEIGGVKVIAKQVNAKDMNQLRQFVDNWKDKKIGGILVLGAVQGDKVNLISAVSEEAIKAGYHAGKLLKEVATRCGGNGGGRPDMAQAGGKNPAELGTALDYVSTWVKEQQA.

Residues His-566, His-570, Cys-668, and His-672 each contribute to the Zn(2+) site.

This sequence belongs to the class-II aminoacyl-tRNA synthetase family. Zn(2+) serves as cofactor.

Its subcellular location is the cytoplasm. The enzyme catalyses tRNA(Ala) + L-alanine + ATP = L-alanyl-tRNA(Ala) + AMP + diphosphate. Functionally, catalyzes the attachment of alanine to tRNA(Ala) in a two-step reaction: alanine is first activated by ATP to form Ala-AMP and then transferred to the acceptor end of tRNA(Ala). Also edits incorrectly charged Ser-tRNA(Ala) and Gly-tRNA(Ala) via its editing domain. The chain is Alanine--tRNA ligase from Listeria monocytogenes serovar 1/2a (strain ATCC BAA-679 / EGD-e).